A 626-amino-acid chain; its full sequence is Chaperone protein DnaK (626 aa).

At threonine 197 the chain carries Phosphothreonine; by autocatalysis. Low complexity predominate over residues 598-612; it reads AQGEQGQAAQPQAET. The tract at residues 598 to 626 is disordered; the sequence is AQGEQGQAAQPQAETQGDDVQDVEFEEVK. Over residues 613–626 the composition is skewed to acidic residues; the sequence is QGDDVQDVEFEEVK.

Belongs to the heat shock protein 70 family.

Its function is as follows. Acts as a chaperone. In Flavobacterium psychrophilum (strain ATCC 49511 / DSM 21280 / CIP 103535 / JIP02/86), this protein is Chaperone protein DnaK.